Consider the following 206-residue polypeptide: uncharacterized protein (206 aa).

Helical transmembrane passes span 9-29, 47-67, 74-94, and 150-170; these read ILSL…SVLT, LGVV…LAFL, FFVI…INTI, and IAVI…FYAF.

Belongs to the Rht family.

The protein localises to the cell membrane. This is an uncharacterized protein from Synechocystis sp. (strain ATCC 27184 / PCC 6803 / Kazusa).